The primary structure comprises 501 residues: Vitamin D 25-hydroxylase (501 aa).

Position 250 (Ala250) interacts with substrate. Cys448 contributes to the heme binding site.

Belongs to the cytochrome P450 family. In terms of assembly, homodimer. Heme is required as a cofactor. As to expression, highly expressed in the liver and testis.

The protein resides in the endoplasmic reticulum membrane. The protein localises to the microsome membrane. The enzyme catalyses calciol + reduced [NADPH--hemoprotein reductase] + O2 = calcidiol + oxidized [NADPH--hemoprotein reductase] + H2O + H(+). It carries out the reaction vitamin D2 + reduced [NADPH--hemoprotein reductase] + O2 = 25-hydroxyvitamin D2 + oxidized [NADPH--hemoprotein reductase] + H2O + H(+). It catalyses the reaction 1alpha-hydroxyvitamin D2 + reduced [NADPH--hemoprotein reductase] + O2 = 1alpha,25-dihydroxyvitamin D2 + oxidized [NADPH--hemoprotein reductase] + H2O + H(+). The catalysed reaction is alfacalcidol + reduced [NADPH--hemoprotein reductase] + O2 = calcitriol + oxidized [NADPH--hemoprotein reductase] + H2O + H(+). Its pathway is hormone biosynthesis; vitamin D biosynthesis. Its function is as follows. A cytochrome P450 monooxygenase involved in activation of vitamin D precursors. Catalyzes hydroxylation at C-25 of both forms of vitamin D, vitamin D(2) and D(3) (calciol). Can metabolize vitamin D analogs/prodrugs 1alpha-hydroxyvitamin D(2) (doxercalciferol) and 1alpha-hydroxyvitamin D(3) (alfacalcidol) forming 25-hydroxy derivatives. Mechanistically, uses molecular oxygen inserting one oxygen atom into a substrate, and reducing the second into a water molecule, with two electrons provided by NADPH via cytochrome P450 reductase (CPR; NADPH-ferrihemoprotein reductase). The sequence is that of Vitamin D 25-hydroxylase (Cyp2r1) from Mus musculus (Mouse).